A 416-amino-acid polypeptide reads, in one-letter code: NADH-quinone oxidoreductase subunit H (416 aa).

A run of 9 helical transmembrane segments spans residues 16–36, 84–104, 124–144, 165–185, 197–217, 260–280, 288–308, 320–340, and 353–373; these read LILAKAVGVFVFLVLTVLAAI, PVYLLAPVISVIPAFLAFAVI, LAVAVLYILAVTSVGVYGIVL, VVSYEIAMALSFATVFLYAGT, STWYVFLLLPSFLVYVTSMVG, VSALATTMFLGGWHAPWPISL, WWPLLWFTAKVWVFLFVYIWL, FMAIGWKMLIPVSLAWIMIVA, and WASGLLIAGTVLTFGLAVILW.

Belongs to the complex I subunit 1 family. As to quaternary structure, NDH-1 is composed of 14 different subunits. Subunits NuoA, H, J, K, L, M, N constitute the membrane sector of the complex.

Its subcellular location is the cell membrane. The enzyme catalyses a quinone + NADH + 5 H(+)(in) = a quinol + NAD(+) + 4 H(+)(out). Its function is as follows. NDH-1 shuttles electrons from NADH, via FMN and iron-sulfur (Fe-S) centers, to quinones in the respiratory chain. The immediate electron acceptor for the enzyme in this species is believed to be menaquinone. Couples the redox reaction to proton translocation (for every two electrons transferred, four hydrogen ions are translocated across the cytoplasmic membrane), and thus conserves the redox energy in a proton gradient. This subunit may bind ubiquinone. This is NADH-quinone oxidoreductase subunit H from Mycobacterium sp. (strain KMS).